The chain runs to 336 residues: Eukaryotic translation initiation factor 3 subunit I (336 aa).

WD repeat units lie at residues 8 to 47 (GHER…RLGT), 50 to 91 (GHLG…KVWE), 146 to 185 (CTES…QLEN), 190 to 229 (EFDH…ILKT), and 287 to 326 (GHFG…FDFM).

It belongs to the eIF-3 subunit I family. In terms of assembly, component of the eukaryotic translation initiation factor 3 (eIF-3) complex.

Its subcellular location is the cytoplasm. Its function is as follows. Component of the eukaryotic translation initiation factor 3 (eIF-3) complex, which is involved in protein synthesis of a specialized repertoire of mRNAs and, together with other initiation factors, stimulates binding of mRNA and methionyl-tRNAi to the 40S ribosome. The eIF-3 complex specifically targets and initiates translation of a subset of mRNAs involved in cell proliferation. The polypeptide is Eukaryotic translation initiation factor 3 subunit I (tif34) (Emericella nidulans (strain FGSC A4 / ATCC 38163 / CBS 112.46 / NRRL 194 / M139) (Aspergillus nidulans)).